Here is a 131-residue protein sequence, read N- to C-terminus: Small ribosomal subunit protein eS17A (131 aa).

This sequence belongs to the eukaryotic ribosomal protein eS17 family. As to quaternary structure, component of the small ribosomal subunit (SSU). Mature yeast ribosomes consist of a small (40S) and a large (60S) subunit. The 40S small subunit contains 1 molecule of ribosomal RNA (18S rRNA) and at least 33 different proteins. The large 60S subunit contains 3 rRNA molecules (25S, 5.8S and 5S rRNA) and at least 46 different proteins.

It is found in the cytoplasm. Its function is as follows. Component of the ribosome, a large ribonucleoprotein complex responsible for the synthesis of proteins in the cell. The small ribosomal subunit (SSU) binds messenger RNAs (mRNAs) and translates the encoded message by selecting cognate aminoacyl-transfer RNA (tRNA) molecules. The large subunit (LSU) contains the ribosomal catalytic site termed the peptidyl transferase center (PTC), which catalyzes the formation of peptide bonds, thereby polymerizing the amino acids delivered by tRNAs into a polypeptide chain. The nascent polypeptides leave the ribosome through a tunnel in the LSU and interact with protein factors that function in enzymatic processing, targeting, and the membrane insertion of nascent chains at the exit of the ribosomal tunnel. The chain is Small ribosomal subunit protein eS17A (rps1701) from Schizosaccharomyces pombe (strain 972 / ATCC 24843) (Fission yeast).